The following is a 163-amino-acid chain: 6,7-dimethyl-8-ribityllumazine synthase (163 aa).

5-amino-6-(D-ribitylamino)uracil contacts are provided by residues F27, A58–E60, and C87–V89. A (2S)-2-hydroxy-3-oxobutyl phosphate-binding site is contributed by D92–T93. Residue H95 is the Proton donor of the active site. Position 120 (N120) interacts with 5-amino-6-(D-ribitylamino)uracil. R134 lines the (2S)-2-hydroxy-3-oxobutyl phosphate pocket.

It belongs to the DMRL synthase family.

It catalyses the reaction (2S)-2-hydroxy-3-oxobutyl phosphate + 5-amino-6-(D-ribitylamino)uracil = 6,7-dimethyl-8-(1-D-ribityl)lumazine + phosphate + 2 H2O + H(+). The protein operates within cofactor biosynthesis; riboflavin biosynthesis; riboflavin from 2-hydroxy-3-oxobutyl phosphate and 5-amino-6-(D-ribitylamino)uracil: step 1/2. Its function is as follows. Catalyzes the formation of 6,7-dimethyl-8-ribityllumazine by condensation of 5-amino-6-(D-ribitylamino)uracil with 3,4-dihydroxy-2-butanone 4-phosphate. This is the penultimate step in the biosynthesis of riboflavin. The polypeptide is 6,7-dimethyl-8-ribityllumazine synthase (Rhodopseudomonas palustris (strain BisA53)).